The sequence spans 587 residues: MVIKCPNCDKNDFKSVRGLNCHISRIHPSSADGRGLRPSTDTRGRRDDKDIVVKDITCPFCDKNDFKSERGLSCHITRMHRSSSDGKGPRPSTGTRDRKDDRDGARPETLTPRHEDHERHNSDRDVVKGIAKVQRDSLQKGSPDNILLKDGARPETLTPRHEDHERHNSDRDVVKGVAKVQRESLQRGSPGNILLKNDAVGAKPESRPAKYKESPKQSRTTEEPHDRPLSSLSNFILSFNAPNFEKFVKMIEGSIVRPREDSTLRTESVNKFIDDLKVVMERISDIPLKLLKSGSYYDKTKIDYNNEFDFMFYADIKMEADFTNCPPGYCKIRKGVTVNKDLDPFIDRNGYLVPKLYKSHMFDIFEKCRTDPSFRKGRRTQLQDRKPESPAYTLLFDLGIPDKSPIDIDLVPAIRISGWPKTKDAREIQTGKWIDISTAKKAMECFHVVTKQFPEAHPDTNLLWRVSFSHAEKELILHADLSDKGCRKNVFKILKKIKENMKSKNPTEMDKFCSYHLKMFILGFYDTHSDFSKDQKLDMLKKGIEQLAKCVREGAIENYFIPKDNVLQSVPEEERRYVVRELEGLLQ.

2 disordered regions span residues 26–48 (IHPS…RRDD) and 77–229 (TRMH…DRPL). 3 stretches are compositionally biased toward basic and acidic residues: residues 95 to 138 (TRDR…RDSL), 150 to 185 (DGAR…RESL), and 204 to 228 (PESR…HDRP). Mg(2+) is bound by residues E307, D309, and D409.

Belongs to the mab-21 family. It depends on Mg(2+) as a cofactor. Mn(2+) is required as a cofactor.

The enzyme catalyses UTP + ATP = 2',3'-cUAMP + 2 diphosphate. Nucleotidyltransferase that catalyzes the formation of cyclic UMP-AMP (2',3'-cUAMP) from ATP and UTP and plays a key role in innate immunity. Acts as a key sensor of double-stranded DNA (dsDNA), the presence of dsDNA in the cytoplasm being a danger signal that triggers the immune responses. Directly binds dsDNA, activating the nucleotidyltransferase activity, leading to synthesis of 2',3'-cUAMP, a second messenger that binds to and activates Sting, thereby triggering the immune response via activation of the NF-kappa-B transcription factor. This chain is Cyclic GMP-AMP synthase-like receptor, found in Magallana gigas (Pacific oyster).